The primary structure comprises 142 residues: Alpha-lactalbumin (142 aa).

The signal sequence occupies residues 1–19 (MMSFVSLLLVGILFHATQA). In terms of domain architecture, C-type lysozyme spans 20–142 (EQLTKCEVFR…KLDQWLCEKL (123 aa)). Intrachain disulfides connect Cys-25–Cys-139, Cys-47–Cys-130, Cys-80–Cys-96, and Cys-92–Cys-110. Asn-64 and Asn-93 each carry an N-linked (GlcNAc...) asparagine glycan. 5 residues coordinate Ca(2+): Lys-98, Asp-101, Asp-103, Asp-106, and Asp-107.

The protein belongs to the glycosyl hydrolase 22 family. Lactose synthase (LS) is a heterodimer of a catalytic component, beta1,4-galactosyltransferase (beta4Gal-T1) and a regulatory component, alpha-lactalbumin (LA). In terms of tissue distribution, mammary gland specific. Secreted in milk.

The protein localises to the secreted. Regulatory subunit of lactose synthase, changes the substrate specificity of galactosyltransferase in the mammary gland making glucose a good acceptor substrate for this enzyme. This enables LS to synthesize lactose, the major carbohydrate component of milk. In other tissues, galactosyltransferase transfers galactose onto the N-acetylglucosamine of the oligosaccharide chains in glycoproteins. This chain is Alpha-lactalbumin (LALBA), found in Bos mutus grunniens (Wild yak).